An 81-amino-acid chain; its full sequence is Large ribosomal subunit protein bL31B (81 aa).

The protein belongs to the bacterial ribosomal protein bL31 family. Type B subfamily. In terms of assembly, part of the 50S ribosomal subunit.

The protein is Large ribosomal subunit protein bL31B of Exiguobacterium sibiricum (strain DSM 17290 / CCUG 55495 / CIP 109462 / JCM 13490 / 255-15).